A 168-amino-acid polypeptide reads, in one-letter code: Phosphopantetheine adenylyltransferase (168 aa).

Serine 9 contacts substrate. Residues 9-10 (SF) and histidine 17 contribute to the ATP site. The substrate site is built by lysine 41, leucine 73, and arginine 87. Residues 88 to 90 (GLR), glutamate 98, and 123 to 129 (YAFLSSS) each bind ATP.

It belongs to the bacterial CoaD family. As to quaternary structure, homohexamer. Mg(2+) serves as cofactor.

Its subcellular location is the cytoplasm. It carries out the reaction (R)-4'-phosphopantetheine + ATP + H(+) = 3'-dephospho-CoA + diphosphate. It functions in the pathway cofactor biosynthesis; coenzyme A biosynthesis; CoA from (R)-pantothenate: step 4/5. Reversibly transfers an adenylyl group from ATP to 4'-phosphopantetheine, yielding dephospho-CoA (dPCoA) and pyrophosphate. The protein is Phosphopantetheine adenylyltransferase of Heliobacterium modesticaldum (strain ATCC 51547 / Ice1).